Reading from the N-terminus, the 96-residue chain is Large ribosomal subunit protein bL21 (96 aa).

The protein belongs to the bacterial ribosomal protein bL21 family. In terms of assembly, part of the 50S ribosomal subunit. Contacts protein L20.

This protein binds to 23S rRNA in the presence of protein L20. The sequence is that of Large ribosomal subunit protein bL21 from Prosthecochloris aestuarii (strain DSM 271 / SK 413).